The primary structure comprises 353 residues: Ribosomal RNA small subunit methyltransferase C (353 aa).

Belongs to the methyltransferase superfamily. RsmC family. Monomer.

The protein resides in the cytoplasm. The catalysed reaction is guanosine(1207) in 16S rRNA + S-adenosyl-L-methionine = N(2)-methylguanosine(1207) in 16S rRNA + S-adenosyl-L-homocysteine + H(+). In terms of biological role, specifically methylates the guanine in position 1207 of 16S rRNA in the 30S particle. This chain is Ribosomal RNA small subunit methyltransferase C, found in Marinomonas sp. (strain MWYL1).